A 570-amino-acid polypeptide reads, in one-letter code: Ferroportin (570 aa).

Over 1–23 the chain is Cytoplasmic; it reads MTKARDQTHQEGCCGSLANYLTS. A helical membrane pass occupies residues 24–53; the sequence is AKFLLYLGHSLSTWGDRMWHFAVSVFLVEL. Positions 39 and 43 each coordinate Fe cation. The Extracellular portion of the chain corresponds to 54–57; it reads YGNS. The helical transmembrane segment at 58 to 84 threads the bilayer; it reads LLLTAVYGLVVAGSVLVLGAIIGDWVD. At 85–87 the chain is on the cytoplasmic side; sequence KNA. Residues 88 to 118 traverse the membrane as a helical segment; sequence RLKVAQTSLVVQNVSVILCGIILMMVFLHKN. The Extracellular segment spans residues 119 to 126; the sequence is ELLTMYHG. Residues 127–162 form a helical membrane-spanning segment; that stretch reads WVLTVCYILIITIANIANLASTATAITIQRDWIVVV. Topologically, residues 163-164 are cytoplasmic; it reads AG. The chain crosses the membrane as a helical span at residues 165–195; that stretch reads ENRSRLADMNATIRRIDQLTNILAPMAVGQI. Residues 196-202 lie on the Extracellular side of the membrane; sequence MTFGSPV. The helical transmembrane segment at 203–229 threads the bilayer; it reads IGCGFISGWNLVSMCVEYFLLWKVYQK. Topologically, residues 230-306 are cytoplasmic; that stretch reads TPALAVKAAL…DGWVSYYNQP (77 aa). The helical transmembrane segment at 307-333 threads the bilayer; sequence VFLAGMGLAFLYMTVLGFDCITTGYAY. C326 serves as a coordination point for Fe cation. The Extracellular segment spans residues 334 to 338; that stretch reads TQGLS. Residues 339 to 366 traverse the membrane as a helical segment; it reads GSILSILMGASAITGIMGTVAFTWLRRK. Residues 367-368 are Cytoplasmic-facing; sequence CG. The helical transmembrane segment at 369 to 391 threads the bilayer; that stretch reads LVRTGLFSGLAQLSCLILCVISV. The Extracellular segment spans residues 392 to 452; it reads FMPGSPLDLS…EMSTKPIPIV (61 aa). N-linked (GlcNAc...) asparagine glycosylation occurs at N437. Residues 453–482 traverse the membrane as a helical segment; that stretch reads SVSLLFAGVIAARIGLWSFDLTVTQLLQEN. At 483–487 the chain is on the cytoplasmic side; that stretch reads VIESE. Residues 488–512 traverse the membrane as a helical segment; it reads RGIINGVQNSMNYLLDLLHFIMVIL. H506 lines the Fe cation pocket. At 513–515 the chain is on the extracellular side; that stretch reads APN. A helical transmembrane segment spans residues 516–541; that stretch reads PEAFGLLVLISVSFVAMGHLMYFRFA. Topologically, residues 542–570 are cytoplasmic; that stretch reads QKTLGNQIFVCGPDEKEVTDENQPNTSVV.

This sequence belongs to the ferroportin (FP) (TC 2.A.100) family. SLC40A subfamily. As to quaternary structure, identified in a complex with STOM. Interacts with HAMP; affinity of the peptide hormone HAMP for SLC40A1 increases by 80-fold in the presence of iron and the interaction promotes SLC40A1 ubiquitination and degradation. Part of a complex composed of SLC40A1/ferroportin, TF/transferrin and HEPH/hephaestin that transfers iron from cells to transferrin. In terms of processing, polyubiquitinated by RNF217; leading to proteasomal degradation. Under conditions of high systemic iron levels, both the hormone peptide hepcidin/HAMP and holo(iron bound)-transferrin/TF induce the ubiquitination, internalization and proteasomal degradation of SLC40A1 to control iron release from cells. As to expression, high expression in spleen, liver, kidney, heart and duodenum.

It is found in the cell membrane. The protein resides in the basolateral cell membrane. The enzyme catalyses Fe(2+)(in) = Fe(2+)(out). Functionally, transports Fe(2+) from the inside of a cell to the outside of the cell, playing a key role for maintaining systemic iron homeostasis. Transports iron from intestinal, splenic, hepatic cells, macrophages and erythrocytes into the blood to provide iron to other tissues. Controls therefore dietary iron uptake, iron recycling by macrophages and erythrocytes, and release of iron stores in hepatocytes. When iron is in excess in serum, circulating HAMP/hepcidin levels increase resulting in a degradation of SLC40A1, thus limiting the iron efflux to plasma. The protein is Ferroportin of Mus musculus (Mouse).